A 394-amino-acid polypeptide reads, in one-letter code: Guanine nucleotide-binding protein G(s) subunit alpha isoforms short (394 aa).

A disordered region spans residues 1–23 (MGCLGNSKTEDQRNEEKAQREAN). Residue glycine 2 is the site of N-palmitoyl glycine attachment. A lipid anchor (S-palmitoyl cysteine) is attached at cysteine 3. A compositionally biased stretch (basic and acidic residues) spans 8–23 (KTEDQRNEEKAQREAN). In terms of domain architecture, G-alpha spans 39–394 (ATHRLLLLGA…RMHLRQYELL (356 aa)). Residues 42-55 (RLLLLGAGESGKST) form a G1 motif region. 47–55 (GAGESGKST) serves as a coordination point for GTP. Serine 54 is a Mg(2+) binding site. The segment at 68–91 (FNGEGGEEDPQAARSNSDGEKATK) is disordered. Positions 196–204 (DLLRCRVLT) are G2 motif. GTP contacts are provided by residues 197–204 (LLRCRVLT), 223–227 (DVGGQ), and 292–295 (NKQD). Threonine 204 provides a ligand contact to Mg(2+). A G3 motif region spans residues 219 to 228 (FHMFDVGGQR). Residues 288 to 295 (ILFLNKQD) are G4 motif. Residue lysine 300 forms a Glycyl lysine isopeptide (Lys-Gly) (interchain with G-Cter in ubiquitin) linkage. Position 352 is a phosphoserine (serine 352). A G5 motif region spans residues 364–369 (TCAVDT). Alanine 366 contacts GTP.

It belongs to the G-alpha family. G(s) subfamily. As to quaternary structure, heterotrimeric G proteins are composed of 3 units; alpha, beta and gamma. The alpha chain contains the guanine nucleotide binding site. Component of the TAS2R14-GNAS2 complex, consisting of TAS2R14, GNAS2, GNB1 and GNG2; within the complex interacts with TAS2R14; this complex plays a role in the perception of bitterness. Interacts with CRY1; the interaction may block GPCR-mediated regulation of cAMP concentrations. Interacts with ADCY6 and stimulates its adenylyl cyclase activity. Interacts with ADCY2 and ADCY5. Stimulates the ADCY5 adenylyl cyclase activity. Interacts (GDP-bound form) with RIC8B; promoting GNAS folding and association with the plasma membrane. Interaction with SASH1. Interacts with GASL2L2.

It localises to the cell membrane. The catalysed reaction is GTP + H2O = GDP + phosphate + H(+). Functionally, guanine nucleotide-binding proteins (G proteins) function as transducers in numerous signaling pathways controlled by G protein-coupled receptors (GPCRs). The alpha chain contains the guanine nucleotide binding site and alternates between an active, GTP-bound state and an inactive, GDP-bound state. Signaling by an activated GPCR promotes GDP release and GTP binding. The alpha subunit has a low GTPase activity that converts bound GTP to GDP, thereby terminating the signal. Both GDP release and GTP hydrolysis are modulated by numerous regulatory proteins. Signaling involves the activation of adenylyl cyclases, resulting in increased levels of the signaling molecule cAMP. Functions downstream of beta-adrenergic receptors. Stimulates the Ras signaling pathway via RAPGEF2. This Bos taurus (Bovine) protein is Guanine nucleotide-binding protein G(s) subunit alpha isoforms short (GNAS).